Here is a 335-residue protein sequence, read N- to C-terminus: 4-hydroxy-3-methylbut-2-enyl diphosphate reductase (335 aa).

Residue cysteine 14 coordinates [4Fe-4S] cluster. Residues histidine 43 and histidine 81 each coordinate (2E)-4-hydroxy-3-methylbut-2-enyl diphosphate. The dimethylallyl diphosphate site is built by histidine 43 and histidine 81. The isopentenyl diphosphate site is built by histidine 43 and histidine 81. Cysteine 103 provides a ligand contact to [4Fe-4S] cluster. Histidine 132 is a (2E)-4-hydroxy-3-methylbut-2-enyl diphosphate binding site. Histidine 132 is a dimethylallyl diphosphate binding site. Histidine 132 lines the isopentenyl diphosphate pocket. The Proton donor role is filled by glutamate 134. Position 179 (threonine 179) interacts with (2E)-4-hydroxy-3-methylbut-2-enyl diphosphate. Cysteine 209 provides a ligand contact to [4Fe-4S] cluster. (2E)-4-hydroxy-3-methylbut-2-enyl diphosphate is bound by residues serine 237, serine 238, asparagine 239, and serine 285. Serine 237, serine 238, asparagine 239, and serine 285 together coordinate dimethylallyl diphosphate. Serine 237, serine 238, asparagine 239, and serine 285 together coordinate isopentenyl diphosphate.

The protein belongs to the IspH family. Requires [4Fe-4S] cluster as cofactor.

The catalysed reaction is isopentenyl diphosphate + 2 oxidized [2Fe-2S]-[ferredoxin] + H2O = (2E)-4-hydroxy-3-methylbut-2-enyl diphosphate + 2 reduced [2Fe-2S]-[ferredoxin] + 2 H(+). It catalyses the reaction dimethylallyl diphosphate + 2 oxidized [2Fe-2S]-[ferredoxin] + H2O = (2E)-4-hydroxy-3-methylbut-2-enyl diphosphate + 2 reduced [2Fe-2S]-[ferredoxin] + 2 H(+). The protein operates within isoprenoid biosynthesis; dimethylallyl diphosphate biosynthesis; dimethylallyl diphosphate from (2E)-4-hydroxy-3-methylbutenyl diphosphate: step 1/1. It functions in the pathway isoprenoid biosynthesis; isopentenyl diphosphate biosynthesis via DXP pathway; isopentenyl diphosphate from 1-deoxy-D-xylulose 5-phosphate: step 6/6. Functionally, catalyzes the conversion of 1-hydroxy-2-methyl-2-(E)-butenyl 4-diphosphate (HMBPP) into a mixture of isopentenyl diphosphate (IPP) and dimethylallyl diphosphate (DMAPP). Acts in the terminal step of the DOXP/MEP pathway for isoprenoid precursor biosynthesis. The sequence is that of 4-hydroxy-3-methylbut-2-enyl diphosphate reductase from Deinococcus radiodurans (strain ATCC 13939 / DSM 20539 / JCM 16871 / CCUG 27074 / LMG 4051 / NBRC 15346 / NCIMB 9279 / VKM B-1422 / R1).